Consider the following 1621-residue polypeptide: ABC transporter A family member 2 (1621 aa).

7 consecutive transmembrane segments (helical) span residues 30–50 (ILFPIIVILVIFAILVLVMAF), 234–254 (SVFITAALMIFGFRLITDLVI), 276–296 (ISWMITSLVTALPVNLIISII), 309–329 (GVVIFTLILYLLTLLLLAFIL), 338–358 (FCGLLSFVIIIAINIGGIFVA), 365–385 (GAKLFLCLISPIAIACSIFAM), and 405–425 (NQVIGMLVLDIFFYIFLVWYL). Residues 484–717 (ISIRNLRKEY…FGCGYLLTCS (234 aa)) enclose the ABC transporter 1 domain. 520–527 (GPNGSGKS) lines the ATP pocket. The next 7 helical transmembrane spans lie at 856–876 (FFLTLVIPLVFIIGSIIMYKA), 1033–1053 (IVYFIIIMMAGYALMAGSFAG), 1083–1103 (VWDYFFSFILILLTTCILAGI), 1111–1131 (FGLMFLCLILFCVSVVPLSYL), 1142–1162 (ATGAITAIHFAIGIIFVIISL), 1183–1203 (VDIVFCILSPLFAYSRILFLV), and 1227–1247 (GSPMIILAAHCIVWVSWIMIL). In terms of domain architecture, ABC transporter 2 spans 1293–1528 (LQFRNLHKLF…FGAGYTFDVK (236 aa)). 1331-1338 (GLNGAGKT) contributes to the ATP binding site.

This sequence belongs to the ABC transporter superfamily. ABCA family.

Its subcellular location is the membrane. In Dictyostelium discoideum (Social amoeba), this protein is ABC transporter A family member 2 (abcA2).